The sequence spans 158 residues: Cyclic pyranopterin monophosphate synthase (158 aa).

Substrate-binding positions include 76–78 (LCH) and 114–115 (ME). Residue D129 is part of the active site.

This sequence belongs to the MoaC family. As to quaternary structure, homohexamer; trimer of dimers.

The enzyme catalyses (8S)-3',8-cyclo-7,8-dihydroguanosine 5'-triphosphate = cyclic pyranopterin phosphate + diphosphate. Its pathway is cofactor biosynthesis; molybdopterin biosynthesis. In terms of biological role, catalyzes the conversion of (8S)-3',8-cyclo-7,8-dihydroguanosine 5'-triphosphate to cyclic pyranopterin monophosphate (cPMP). The polypeptide is Cyclic pyranopterin monophosphate synthase (Shewanella frigidimarina (strain NCIMB 400)).